Reading from the N-terminus, the 414-residue chain is MASAEIIAVGTELLLGQIVNSNAAFISQELAADGIYVYHHTVVGDNPTRLKEVIEIAENRSDILIFTGGLGPTEDDITKQILAAHLQKQLVEDEYHMNKINEYFTSRNRTMTENNKLQAVIIEDSIVLNNDFGFAAGMYLRENNHTYVLLPGPPSEMKPMFTSYANPLLLSESGDQNILESKIMRFFGIGESQLAADLNDLIVTQVNPTIATYAGDNEVVVRITATAKTKEEASRLVKETEEEILRREGTFLYGYGEVSLSELVTAMLLEKELTISAAESFTAGLFQAEIARFPGISKIFKGGMVTYSEETKQSILQVSPQVIKEKGVVSAECAKEMAENVSRLCKTDIGISFTGVAGPDSLEGHPAGTIWIGLSVKGYETEAFQFVYGRDRNHNRRRAVKQGFQLIKQFLDAN.

The protein belongs to the CinA family.

The chain is Putative competence-damage inducible protein from Listeria monocytogenes serotype 4b (strain CLIP80459).